The following is a 586-amino-acid chain: Eukaryotic translation initiation factor 3 subunit D (586 aa).

Residues 107-154 form a disordered region; that stretch reads FGRGGGTVFRGRAQRGGAGQRGGRAGFQRVGAGRGQGGDRYYDNRGAR. Over residues 108-131 the composition is skewed to gly residues; the sequence is GRGGGTVFRGRAQRGGAGQRGGRA. The segment at 301-315 is RNA gate; that stretch reads SLDLVTVNENAADAP. The segment covering 566-577 has biased composition (acidic residues); it reads FEEDDEAAEEEQ. Residues 566–586 form a disordered region; sequence FEEDDEAAEEEQEAKGEVEEA.

This sequence belongs to the eIF-3 subunit D family. In terms of assembly, component of the eukaryotic translation initiation factor 3 (eIF-3) complex.

It localises to the cytoplasm. In terms of biological role, mRNA cap-binding component of the eukaryotic translation initiation factor 3 (eIF-3) complex, which is involved in protein synthesis of a specialized repertoire of mRNAs and, together with other initiation factors, stimulates binding of mRNA and methionyl-tRNAi to the 40S ribosome. The eIF-3 complex specifically targets and initiates translation of a subset of mRNAs involved in cell proliferation. In the eIF-3 complex, eif3d specifically recognizes and binds the 7-methylguanosine cap of a subset of mRNAs. This chain is Eukaryotic translation initiation factor 3 subunit D, found in Emericella nidulans (strain FGSC A4 / ATCC 38163 / CBS 112.46 / NRRL 194 / M139) (Aspergillus nidulans).